A 248-amino-acid polypeptide reads, in one-letter code: Triosephosphate isomerase (248 aa).

9–11 (NWK) serves as a coordination point for substrate. Catalysis depends on histidine 94, which acts as the Electrophile. Glutamate 166 serves as the catalytic Proton acceptor. Substrate is bound by residues glycine 172, serine 212, and 233–234 (GG).

It belongs to the triosephosphate isomerase family. Homodimer.

The protein resides in the cytoplasm. The catalysed reaction is D-glyceraldehyde 3-phosphate = dihydroxyacetone phosphate. The protein operates within carbohydrate biosynthesis; gluconeogenesis. It functions in the pathway carbohydrate degradation; glycolysis; D-glyceraldehyde 3-phosphate from glycerone phosphate: step 1/1. Involved in the gluconeogenesis. Catalyzes stereospecifically the conversion of dihydroxyacetone phosphate (DHAP) to D-glyceraldehyde-3-phosphate (G3P). This is Triosephosphate isomerase from Caldanaerobacter subterraneus subsp. tengcongensis (strain DSM 15242 / JCM 11007 / NBRC 100824 / MB4) (Thermoanaerobacter tengcongensis).